A 680-amino-acid polypeptide reads, in one-letter code: Cytosolic endo-beta-N-acetylglucosaminidase 1 (680 aa).

A compositionally biased stretch (pro residues) spans 1–15; that stretch reads MSVAPPAPSPPPFDP. Residues 1–21 form a disordered region; sequence MSVAPPAPSPPPFDPTKPSTP.

It belongs to the glycosyl hydrolase 85 family.

The protein localises to the cytoplasm. It is found in the cytosol. It carries out the reaction an N(4)-(oligosaccharide-(1-&gt;3)-[oligosaccharide-(1-&gt;6)]-beta-D-Man-(1-&gt;4)-beta-D-GlcNAc-(1-&gt;4)-alpha-D-GlcNAc)-L-asparaginyl-[protein] + H2O = an oligosaccharide-(1-&gt;3)-[oligosaccharide-(1-&gt;6)]-beta-D-Man-(1-&gt;4)-D-GlcNAc + N(4)-(N-acetyl-beta-D-glucosaminyl)-L-asparaginyl-[protein]. Functionally, endoglycosidase that releases N-glycans from glycoproteins by cleaving the beta-1,4-glycosidic bond in the N,N'-diacetylchitobiose core. Involved in the production of high-mannose type N-glycans during plant development and fruit maturation. This Arabidopsis thaliana (Mouse-ear cress) protein is Cytosolic endo-beta-N-acetylglucosaminidase 1.